Reading from the N-terminus, the 559-residue chain is Sesquiterpene synthase (559 aa).

Mg(2+) contacts are provided by Asp312, Asp316, and Glu464. A DDXXD motif motif is present at residues 312-316; that stretch reads DDIYD.

It belongs to the terpene synthase family. Tpsa subfamily. Mg(2+) serves as cofactor. Requires Mn(2+) as cofactor.

Catalyzes alpha-humulene and delta-cadinene, as well as beta-elemene, the thermal rearrangement product of germacrene A and several other bicyclic sesquiterpenes when incubated with (2E,6E)-farnesyl diphosphate. In Santalum austrocaledonicum (Sandalwood), this protein is Sesquiterpene synthase.